The sequence spans 195 residues: Phosphoheptose isomerase (195 aa).

An SIS domain is found at 36–195 (LVDSLKGDGI…IIEKELFGLD (160 aa)). 51–53 (NGG) is a substrate binding site. 2 residues coordinate Zn(2+): H60 and E64. Substrate contacts are provided by residues E64, 95-96 (ND), 121-123 (TTS), S126, and Q173. Residues Q173 and H181 each contribute to the Zn(2+) site.

Belongs to the SIS family. GmhA subfamily. Requires Zn(2+) as cofactor.

The protein localises to the cytoplasm. The catalysed reaction is 2 D-sedoheptulose 7-phosphate = D-glycero-alpha-D-manno-heptose 7-phosphate + D-glycero-beta-D-manno-heptose 7-phosphate. It functions in the pathway carbohydrate biosynthesis; D-glycero-D-manno-heptose 7-phosphate biosynthesis; D-glycero-alpha-D-manno-heptose 7-phosphate and D-glycero-beta-D-manno-heptose 7-phosphate from sedoheptulose 7-phosphate: step 1/1. Its function is as follows. Catalyzes the isomerization of sedoheptulose 7-phosphate in D-glycero-D-manno-heptose 7-phosphate. The polypeptide is Phosphoheptose isomerase (Leptospira biflexa serovar Patoc (strain Patoc 1 / Ames)).